The following is a 253-amino-acid chain: 5-oxoprolinase subunit A (253 aa).

The protein belongs to the LamB/PxpA family. In terms of assembly, forms a complex composed of PxpA, PxpB and PxpC.

The enzyme catalyses 5-oxo-L-proline + ATP + 2 H2O = L-glutamate + ADP + phosphate + H(+). In terms of biological role, catalyzes the cleavage of 5-oxoproline to form L-glutamate coupled to the hydrolysis of ATP to ADP and inorganic phosphate. The polypeptide is 5-oxoprolinase subunit A (Bacillus anthracis (strain A0248)).